We begin with the raw amino-acid sequence, 140 residues long: Transcription antitermination protein NusB (140 aa).

Belongs to the NusB family.

In terms of biological role, involved in transcription antitermination. Required for transcription of ribosomal RNA (rRNA) genes. Binds specifically to the boxA antiterminator sequence of the ribosomal RNA (rrn) operons. The polypeptide is Transcription antitermination protein NusB (Leptospira biflexa serovar Patoc (strain Patoc 1 / Ames)).